The chain runs to 327 residues: Methionyl-tRNA formyltransferase (327 aa).

121-124 contributes to the (6S)-5,6,7,8-tetrahydrofolate binding site; it reads SLLP.

This sequence belongs to the Fmt family.

It catalyses the reaction L-methionyl-tRNA(fMet) + (6R)-10-formyltetrahydrofolate = N-formyl-L-methionyl-tRNA(fMet) + (6S)-5,6,7,8-tetrahydrofolate + H(+). Attaches a formyl group to the free amino group of methionyl-tRNA(fMet). The formyl group appears to play a dual role in the initiator identity of N-formylmethionyl-tRNA by promoting its recognition by IF2 and preventing the misappropriation of this tRNA by the elongation apparatus. This chain is Methionyl-tRNA formyltransferase, found in Burkholderia multivorans (strain ATCC 17616 / 249).